Consider the following 648-residue polypeptide: 60 kDa heat shock protein homolog 1, mitochondrial (648 aa).

The N-terminal 55 residues, 1–55 (MFRSCVPKAITSSRCFARMYSKDVRFGSGVRAMMIRGVDILADAVAVTMGPKGRS), are a transit peptide targeting the mitochondrion.

Belongs to the chaperonin (HSP60) family.

Its subcellular location is the mitochondrion matrix. Functionally, prevents misfolding and promotes the refolding and proper assembly of unfolded polypeptides generated under stress conditions. The polypeptide is 60 kDa heat shock protein homolog 1, mitochondrial (Hsp60B) (Drosophila melanogaster (Fruit fly)).